We begin with the raw amino-acid sequence, 138 residues long: Putative pre-16S rRNA nuclease (138 aa).

The protein belongs to the YqgF nuclease family.

The protein localises to the cytoplasm. Its function is as follows. Could be a nuclease involved in processing of the 5'-end of pre-16S rRNA. The sequence is that of Putative pre-16S rRNA nuclease from Salmonella arizonae (strain ATCC BAA-731 / CDC346-86 / RSK2980).